The primary structure comprises 257 residues: 4-chloro-allylglycine synthase (257 aa).

Fe cation is bound by residues Glu112, His119, Glu173, His203, Glu207, and His210.

The cofactor is Fe(2+).

The catalysed reaction is 4-chloro-L-lysine + AH2 + O2 = L-2-amino-4-chloropent-4-enoate + formaldehyde + A + NH4(+) + H2O. The protein operates within amino-acid metabolism. Its pathway is antibiotic biosynthesis. In terms of biological role, involved in the biosynthesis of terminal alkyne-containing amino acids such as L-propargylglycine (Pra) and L-beta-ethynylserine, that are produced as antibiotics by S.cattleya. Catalyzes an oxidative C-C bond cleavage in 4-chloro-L-lysine to form 4-chloro-allyl-L-glycine (also named L-2-amino-4-chloropent-4-enoate), with release of formaldehyde and ammonia. Is also able to react with L-lysine directly to produce allylglycine in vitro. The polypeptide is 4-chloro-allylglycine synthase (Streptantibioticus cattleyicolor (strain ATCC 35852 / DSM 46488 / JCM 4925 / NBRC 14057 / NRRL 8057) (Streptomyces cattleya)).